We begin with the raw amino-acid sequence, 1762 residues long: Non-reducing polyketide synthase PKS8-1 (1762 aa).

The segment at 17-247 (DIYRGLHNHS…ARYIELPVYG (231 aa)) is N-terminal acylcarrier protein transacylase domain (SAT). The 435-residue stretch at 385–819 (QSKLAITGIS…GGNTTMVLEE (435 aa)) folds into the Ketosynthase family 3 (KS3) domain. Residues cysteine 558, histidine 694, and histidine 737 each act as for beta-ketoacyl synthase activity in the active site. A malonyl-CoA:ACP transacylase (MAT) domain region spans residues 920–1240 (FSFTGQGASH…MAALHLTGVA (321 aa)). The segment at 1308–1622 (TSTVQQVIAL…PRILLNRFFS (315 aa)) is product template (PT) domain. An N-terminal hotdog fold region spans residues 1312–1448 (QQVIALEVEG…GDANDWLSSW (137 aa)). One can recognise a PKS/mFAS DH domain in the interval 1312–1618 (QQVIALEVEG…FRSYPRILLN (307 aa)). The active-site Proton acceptor; for dehydratase activity is the histidine 1344. Residues 1471-1618 (ASRFTRNMAY…FRSYPRILLN (148 aa)) are C-terminal hotdog fold. The Proton donor; for dehydratase activity role is filled by aspartate 1529. A disordered region spans residues 1632–1689 (RAGNAATVTPQVTIPKPPSSLKTPAPANPSRRDSGVESKPLPPPQPKQAPPSTDSENS). Over residues 1671–1680 (PLPPPQPKQA) the composition is skewed to pro residues. The region spanning 1685–1762 (DSENSTISKA…DMRRWLEEHY (78 aa)) is the Carrier domain. Serine 1722 is subject to O-(pantetheine 4'-phosphoryl)serine.

It catalyses the reaction holo-[ACP] + 8 malonyl-CoA + 8 H(+) = atrochrysone carboxyl-[ACP] + 8 CO2 + 8 CoA + 2 H2O. It functions in the pathway secondary metabolite biosynthesis. Non-reducing polyketide synthase; part of the gene cluster that mediates the biosynthesis of an emodin derivative that may be involved in black Sigatoka disease of banana. The pathway begins with the synthesis of atrochrysone thioester by the polyketide synthase PKS8-1. The atrochrysone carboxyl ACP thioesterase MYCFIDRAFT_190111 then breaks the thioester bond and releases the atrochrysone carboxylic acid from PKS8-1. The decarboxylase MYCFIDRAFT_34057 then catalyzes the concerted decarboxylation-elimination required to convert atochrysone carboxylic acid into emodin anthrone, which is further oxidized to emodin by the anthrone oxygenase MYCFIDRAFT_34418. The functions of the other tailoring enzymes as well as the final product of the cluster have still to be identified. This chain is Non-reducing polyketide synthase PKS8-1 (PKS8-1), found in Pseudocercospora fijiensis (strain CIRAD86) (Black leaf streak disease fungus).